A 201-amino-acid chain; its full sequence is Probable chemoreceptor glutamine deamidase CheD 1 (201 aa).

This sequence belongs to the CheD family.

The catalysed reaction is L-glutaminyl-[protein] + H2O = L-glutamyl-[protein] + NH4(+). Its function is as follows. Probably deamidates glutamine residues to glutamate on methyl-accepting chemotaxis receptors (MCPs), playing an important role in chemotaxis. The protein is Probable chemoreceptor glutamine deamidase CheD 1 of Geobacter sulfurreducens (strain ATCC 51573 / DSM 12127 / PCA).